Reading from the N-terminus, the 304-residue chain is Ribonuclease Z (304 aa).

His63, His65, Asp67, His68, His143, Asp213, and His271 together coordinate Zn(2+). Asp67 acts as the Proton acceptor in catalysis.

The protein belongs to the RNase Z family. As to quaternary structure, homodimer. Zn(2+) serves as cofactor.

The enzyme catalyses Endonucleolytic cleavage of RNA, removing extra 3' nucleotides from tRNA precursor, generating 3' termini of tRNAs. A 3'-hydroxy group is left at the tRNA terminus and a 5'-phosphoryl group is left at the trailer molecule.. Functionally, zinc phosphodiesterase, which displays some tRNA 3'-processing endonuclease activity. Probably involved in tRNA maturation, by removing a 3'-trailer from precursor tRNA. The chain is Ribonuclease Z from Parabacteroides distasonis (strain ATCC 8503 / DSM 20701 / CIP 104284 / JCM 5825 / NCTC 11152).